Consider the following 496-residue polypeptide: Serine/threonine-protein kinase chk1 (496 aa).

Residues 10 to 272 enclose the Protein kinase domain; that stretch reads YHIGREIGTG…VKHVVQHPWL (263 aa). ATP contacts are provided by residues 16 to 24 and Lys-38; that span reads IGTGAFASV. Catalysis depends on Asp-137, which acts as the Proton acceptor.

The protein belongs to the protein kinase superfamily. CAMK Ser/Thr protein kinase family. NIM1 subfamily. In terms of assembly, interacts with crb2. Interacts with rad3. Interacts with rfp1. In terms of processing, phosphorylated.

It is found in the nucleus. It catalyses the reaction L-seryl-[protein] + ATP = O-phospho-L-seryl-[protein] + ADP + H(+). The catalysed reaction is L-threonyl-[protein] + ATP = O-phospho-L-threonyl-[protein] + ADP + H(+). Serine/threonine-protein kinase which is required for checkpoint-mediated cell cycle arrest and activation of DNA repair in response to the presence of DNA damage or unreplicated DNA. May also negatively regulate cell cycle progression during unperturbed cell cycles. Binds to and phosphorylates CDC25. This leads to negative regulation of CDC25 and prevents mitotic entry. In Schizosaccharomyces pombe (strain 972 / ATCC 24843) (Fission yeast), this protein is Serine/threonine-protein kinase chk1 (chk1).